Here is a 130-residue protein sequence, read N- to C-terminus: Fluoride-specific ion channel FluC (130 aa).

The next 4 helical transmembrane spans lie at 9–29 (LAII…TIFL), 39–59 (YATF…VTLA), 71–91 (LLLA…ALEV), and 104–124 (VLYG…GSLI). Positions 79 and 82 each coordinate Na(+).

This sequence belongs to the fluoride channel Fluc/FEX (TC 1.A.43) family.

Its subcellular location is the cell inner membrane. The enzyme catalyses fluoride(in) = fluoride(out). Its activity is regulated as follows. Na(+) is not transported, but it plays an essential structural role and its presence is essential for fluoride channel function. Fluoride-specific ion channel. Important for reducing fluoride concentration in the cell, thus reducing its toxicity. This is Fluoride-specific ion channel FluC from Synechocystis sp. (strain ATCC 27184 / PCC 6803 / Kazusa).